Here is a 221-residue protein sequence, read N- to C-terminus: Deoxyribose-phosphate aldolase (221 aa).

Residue D89 is the Proton donor/acceptor of the active site. K151 serves as the catalytic Schiff-base intermediate with acetaldehyde. The active-site Proton donor/acceptor is the K180.

It belongs to the DeoC/FbaB aldolase family. DeoC type 1 subfamily.

Its subcellular location is the cytoplasm. The catalysed reaction is 2-deoxy-D-ribose 5-phosphate = D-glyceraldehyde 3-phosphate + acetaldehyde. It functions in the pathway carbohydrate degradation; 2-deoxy-D-ribose 1-phosphate degradation; D-glyceraldehyde 3-phosphate and acetaldehyde from 2-deoxy-alpha-D-ribose 1-phosphate: step 2/2. In terms of biological role, catalyzes a reversible aldol reaction between acetaldehyde and D-glyceraldehyde 3-phosphate to generate 2-deoxy-D-ribose 5-phosphate. The chain is Deoxyribose-phosphate aldolase from Mesomycoplasma hyopneumoniae (strain J / ATCC 25934 / NCTC 10110) (Mycoplasma hyopneumoniae).